The following is a 474-amino-acid chain: Cobyric acid synthase (474 aa).

The GATase cobBQ-type domain occupies 251 to 431 (TGFVAIPRLP…LHGLLENSAY (181 aa)). Cysteine 328 functions as the Nucleophile in the catalytic mechanism. Histidine 423 is an active-site residue.

The protein belongs to the CobB/CobQ family. CobQ subfamily.

It functions in the pathway cofactor biosynthesis; adenosylcobalamin biosynthesis. In terms of biological role, catalyzes amidations at positions B, D, E, and G on adenosylcobyrinic A,C-diamide. NH(2) groups are provided by glutamine, and one molecule of ATP is hydrogenolyzed for each amidation. This chain is Cobyric acid synthase, found in Deinococcus radiodurans (strain ATCC 13939 / DSM 20539 / JCM 16871 / CCUG 27074 / LMG 4051 / NBRC 15346 / NCIMB 9279 / VKM B-1422 / R1).